Reading from the N-terminus, the 378-residue chain is S-adenosylmethionine synthase (378 aa).

Histidine 15 provides a ligand contact to ATP. Position 17 (aspartate 17) interacts with Mg(2+). Glutamate 43 is a K(+) binding site. 2 residues coordinate L-methionine: glutamate 56 and glutamine 99. The segment at 99 to 109 is flexible loop; it reads QSPDINQGINR. ATP contacts are provided by residues 164-166, 230-231, aspartate 239, 245-246, alanine 262, and lysine 266; these read DAK, RF, and RK. Aspartate 239 is an L-methionine binding site. Lysine 270 lines the L-methionine pocket.

Belongs to the AdoMet synthase family. In terms of assembly, homotetramer; dimer of dimers. Requires Mg(2+) as cofactor. It depends on K(+) as a cofactor.

It is found in the cytoplasm. It catalyses the reaction L-methionine + ATP + H2O = S-adenosyl-L-methionine + phosphate + diphosphate. Its pathway is amino-acid biosynthesis; S-adenosyl-L-methionine biosynthesis; S-adenosyl-L-methionine from L-methionine: step 1/1. Catalyzes the formation of S-adenosylmethionine (AdoMet) from methionine and ATP. The overall synthetic reaction is composed of two sequential steps, AdoMet formation and the subsequent tripolyphosphate hydrolysis which occurs prior to release of AdoMet from the enzyme. The polypeptide is S-adenosylmethionine synthase (Buchnera aphidicola subsp. Acyrthosiphon pisum (strain 5A)).